The chain runs to 4588 residues: Protocadherin Fat 1 (4588 aa).

The first 21 residues, Met-1–Ser-21, serve as a signal peptide directing secretion. Residues Asp-22–Glu-4181 lie on the Extracellular side of the membrane. 2 Cadherin domains span residues Thr-35 to Phe-149 and Ser-150 to Ile-257. A glycan (N-linked (GlcNAc...) asparagine) is linked at Asn-40. N-linked (GlcNAc...) asparagine glycosylation is present at Asn-333. Cadherin domains lie at Glu-368–Phe-463, Thr-464–Phe-569, Glu-570–Gln-673, Ser-718–Phe-822, Leu-823–Phe-927, Ile-928–Phe-1034, Ser-1035–Thr-1139, Ser-1140–Phe-1245, Leu-1246–Ser-1357, Glu-1359–Phe-1456, Ser-1457–Phe-1562, Thr-1563–Phe-1667, Thr-1668–Phe-1765, Met-1766–Phe-1879, Ala-1880–Phe-1979, Thr-1980–Phe-2081, Val-2082–Phe-2182, Glu-2183–Phe-2283, Ala-2284–Phe-2390, Glu-2391–Phe-2492, Leu-2493–Phe-2596, Arg-2597–Phe-2703, Ser-2704–Phe-2809, Glu-2810–Phe-2918, Thr-2919–Cys-3023, Glu-3024–Phe-3125, Ser-3126–Phe-3230, Glu-3231–Phe-3335, Ser-3336–Phe-3440, Ser-3441–Ile-3545, and Leu-3546–Phe-3647. Residues Asn-660, Asn-740, and Asn-791 are each glycosylated (N-linked (GlcNAc...) asparagine). Asn-998 is a glycosylation site (N-linked (GlcNAc...) asparagine). Residues Asn-1426 and Asn-1551 are each glycosylated (N-linked (GlcNAc...) asparagine). N-linked (GlcNAc...) asparagine glycans are attached at residues Asn-1748, Asn-1864, Asn-1902, Asn-1940, and Asn-1991. N-linked (GlcNAc...) asparagine glycans are attached at residues Asn-2325 and Asn-2464. N-linked (GlcNAc...) asparagine glycosylation is found at Asn-3324, Asn-3422, Asn-3444, Asn-3613, Asn-3640, and Asn-3716. The 38-residue stretch at Val-3790 to Pro-3827 folds into the EGF-like 1 domain. 15 disulfide bridges follow: Cys-3794–Cys-3805, Cys-3799–Cys-3816, Cys-3818–Cys-3826, Cys-3976–Cys-4009, Cys-4017–Cys-4028, Cys-4022–Cys-4038, Cys-4040–Cys-4049, Cys-4056–Cys-4067, Cys-4061–Cys-4076, Cys-4078–Cys-4087, Cys-4093–Cys-4104, Cys-4098–Cys-4113, Cys-4115–Cys-4124, Cys-4131–Cys-4142, and Cys-4136–Cys-4151. The region spanning Ser-3829–Cys-4009 is the Laminin G-like domain. 3 consecutive EGF-like domains span residues Ala-4013–Glu-4050, Ser-4052–Gln-4088, and Leu-4089–Gln-4125. The 37-residue stretch at Asp-4127–Glu-4163 folds into the EGF-like 5; calcium-binding domain. A glycan (N-linked (GlcNAc...) asparagine) is linked at Asn-4152. Cys-4153 and Cys-4162 are oxidised to a cystine. A helical transmembrane segment spans residues Gly-4182–Cys-4202. At Arg-4203–Val-4588 the chain is on the cytoplasmic side. Residues Lys-4204–Ala-4214 carry the Nuclear localization signal motif. Disordered stretches follow at residues Ser-4255–Gly-4275, Ser-4303–Ser-4327, and Leu-4343–Cys-4376. The segment covering Tyr-4256–Arg-4265 has biased composition (polar residues). Residues Ser-4363–Glu-4374 show a composition bias toward polar residues. The PTB-like motif motif lies at Asp-4378–His-4382. 2 disordered regions span residues Phe-4435–Arg-4479 and Glu-4565–Val-4588.

In terms of assembly, interacts (via the C-terminus 4300-4400 AA) with ATN1. Interacts with RERE. Undergoes proteolytic cleavage. The extracellular domain is cleaved off and the cytoplasmic domain (about 400 AA) shuttles to the nucleus. In terms of tissue distribution, expressed in many epithelial and some endothelial and smooth muscle cells.

The protein resides in the cell membrane. Its subcellular location is the nucleus. Functionally, plays an essential role for cellular polarization, directed cell migration and modulating cell-cell contact. The protein is Protocadherin Fat 1 (FAT1) of Homo sapiens (Human).